The primary structure comprises 152 residues: Leukocyte-associated immunoglobulin-like receptor 2 (152 aa).

The signal sequence occupies residues 1–21; the sequence is MSPHLTALLGLVLCLAQTIHT. The 89-residue stretch at 29 to 117 folds into the Ig-like C2-type domain; that stretch reads PSISAEPGTV…GWSEHSDFLE (89 aa). A disulfide bridge links Cys-49 with Cys-101. The interval 120 to 152 is disordered; it reads VKESSGGPDSPDTEPGSSAGTVPGTEASGFDAP.

Its subcellular location is the secreted. This chain is Leukocyte-associated immunoglobulin-like receptor 2 (LAIR2), found in Homo sapiens (Human).